We begin with the raw amino-acid sequence, 524 residues long: Putative ribose/galactose/methyl galactoside import ATP-binding protein 1 (524 aa).

2 consecutive ABC transporter domains span residues 35–271 and 281–520; these read LEVR…VGRE and VPIG…RIMD. 67–74 is an ATP binding site; sequence GENGAGKS.

The protein belongs to the ABC transporter superfamily. Carbohydrate importer 2 (CUT2) (TC 3.A.1.2) family.

Its subcellular location is the cell inner membrane. The enzyme catalyses D-ribose(out) + ATP + H2O = D-ribose(in) + ADP + phosphate + H(+). The catalysed reaction is D-galactose(out) + ATP + H2O = D-galactose(in) + ADP + phosphate + H(+). Part of an ABC transporter complex involved in carbohydrate import. Could be involved in ribose, galactose and/or methyl galactoside import. Responsible for energy coupling to the transport system. The polypeptide is Putative ribose/galactose/methyl galactoside import ATP-binding protein 1 (Burkholderia cenocepacia (strain HI2424)).